The chain runs to 304 residues: Putative S-adenosyl-L-methionine-dependent methyltransferase MAP_4189c (304 aa).

S-adenosyl-L-methionine is bound by residues aspartate 130 and 159–160; that span reads DL.

It belongs to the UPF0677 family.

Its function is as follows. Exhibits S-adenosyl-L-methionine-dependent methyltransferase activity. The sequence is that of Putative S-adenosyl-L-methionine-dependent methyltransferase MAP_4189c from Mycolicibacterium paratuberculosis (strain ATCC BAA-968 / K-10) (Mycobacterium paratuberculosis).